The chain runs to 173 residues: Protein tyrosine phosphatase type IVA 1 (173 aa).

The 154-residue stretch at Ala-8–Lys-161 folds into the Tyrosine-protein phosphatase domain. Cys-49 and Cys-104 are disulfide-bonded. The active-site Proton donor is Asp-72. Positions Gly-97–Phe-132 are interaction with ATF5. The active-site Phosphocysteine intermediate is Cys-104. Phosphate is bound at residue Val-105 to Arg-110. Arg-110 provides a ligand contact to substrate. At Cys-170 the chain carries Cysteine methyl ester. Cys-170 carries the S-farnesyl cysteine lipid modification. Residues Cys-171–Gln-173 constitute a propeptide, removed in mature form.

The protein belongs to the protein-tyrosine phosphatase family. In terms of assembly, homotrimer. Interacts with ATF5 and tubulin. Farnesylated. Farnesylation is required for membrane targeting.

It is found in the cell membrane. Its subcellular location is the early endosome. The protein resides in the endoplasmic reticulum. The protein localises to the cytoplasm. It localises to the cytoskeleton. It is found in the spindle. Its subcellular location is the nucleus. The enzyme catalyses O-phospho-L-tyrosyl-[protein] + H2O = L-tyrosyl-[protein] + phosphate. Its activity is regulated as follows. Inhibited by sodium orthovanadate and pentamidine. In terms of biological role, protein tyrosine phosphatase which stimulates progression from G1 into S phase during mitosis. May play a role in the development and maintenance of differentiating epithelial tissues. This chain is Protein tyrosine phosphatase type IVA 1 (PTP4A1), found in Pongo abelii (Sumatran orangutan).